The primary structure comprises 310 residues: MNTQARLTSTQWKARFKGYVQVTKPGIIFGNLISVAGGFLLAAKGDVDLVLMLASLVGLSLVVASGCAINNCIDRDIDAKMQRTCKRVTVTGEIPLSHVLLFGIAIGVLGFGILALFTNALALLFAAIGYVVYVGIYSLYMKRNSVYGTLVGSFSGAVPPVVGYCSVTGQMDMGAVILLLMFSLWQMPHSYAIAIFRFNDYAAAKIPVLPVAEGMAKAKHHIVLYIAVFALVSTMLPLAGYTGTAFMAVTCATSLWWLTMALKGYRQDVDMPRWARQVFGFSIITITALSVTMALDFQAVSQTPLFTLVR.

Helical transmembrane passes span 25–45 (PGIIFGNLISVAGGFLLAAKG), 49–69 (LVLMLASLVGLSLVVASGCAI), 98–118 (HVLLFGIAIGVLGFGILALFT), 121–141 (LALLFAAIGYVVYVGIYSLYM), 145–165 (SVYGTLVGSFSGAVPPVVGYC), 176–196 (VILLLMFSLWQMPHSYAIAIF), 222–242 (IVLYIAVFALVSTMLPLAGYT), 245–265 (AFMAVTCATSLWWLTMALKGY), and 277–297 (QVFGFSIITITALSVTMALDF).

Belongs to the UbiA prenyltransferase family. Protoheme IX farnesyltransferase subfamily.

It localises to the cell inner membrane. It carries out the reaction heme b + (2E,6E)-farnesyl diphosphate + H2O = Fe(II)-heme o + diphosphate. It participates in porphyrin-containing compound metabolism; heme O biosynthesis; heme O from protoheme: step 1/1. Converts heme B (protoheme IX) to heme O by substitution of the vinyl group on carbon 2 of heme B porphyrin ring with a hydroxyethyl farnesyl side group. The sequence is that of Protoheme IX farnesyltransferase 2 from Shewanella sp. (strain MR-7).